Here is a 489-residue protein sequence, read N- to C-terminus: IPT/TIG domain-containing protein BACOVA_02650 (489 aa).

The N-terminal stretch at 1 to 27 is a signal peptide; it reads MKSIYKYLDTRLFLIGLLVLPFLAVVS. The N-palmitoyl cysteine moiety is linked to residue cysteine 28. Cysteine 28 is lipidated: S-diacylglycerol cysteine. IPT/TIG domains lie at 57–103, 136–204, and 232–304; these read VNPG…PNEL, PYIT…TAPA, and PVVT…AIGG.

It localises to the cell outer membrane. It participates in glucan metabolism; xyloglucan degradation. Its function is as follows. Polysaccharide-binding protein present at the surface of the cell. Probably mediates xyloglucan-binding before xyloglucan transport in the periplasm for degradation. The protein is IPT/TIG domain-containing protein BACOVA_02650 of Bacteroides ovatus (strain ATCC 8483 / DSM 1896 / JCM 5824 / BCRC 10623 / CCUG 4943 / NCTC 11153).